The following is a 512-amino-acid chain: Cytochrome P450 26B1 (512 aa).

C441 is a heme binding site.

It belongs to the cytochrome P450 family. Requires heme as cofactor. In terms of tissue distribution, highly expressed in brain, particularly in the cerebellum and pons.

Its subcellular location is the endoplasmic reticulum membrane. It is found in the microsome membrane. The catalysed reaction is all-trans-retinoate + reduced [NADPH--hemoprotein reductase] + O2 = all-trans-4-hydroxyretinoate + oxidized [NADPH--hemoprotein reductase] + H2O + H(+). The enzyme catalyses all-trans-retinoate + reduced [NADPH--hemoprotein reductase] + O2 = all-trans-18-hydroxyretinoate + oxidized [NADPH--hemoprotein reductase] + H2O + H(+). Functionally, a cytochrome P450 monooxygenase involved in the metabolism of retinoates (RAs), the active metabolites of vitamin A, and critical signaling molecules in animals. RAs exist as at least four different isomers: all-trans-RA (atRA), 9-cis-RA, 13-cis-RA, and 9,13-dicis-RA, where atRA is considered to be the biologically active isomer, although 9-cis-RA and 13-cis-RA also have activity. Catalyzes the hydroxylation of atRA primarily at C-4 and C-18, thereby contributing to the regulation of atRA homeostasis and signaling. Hydroxylation of atRA limits its biological activity and initiates a degradative process leading to its eventual elimination. Involved in the convertion of atRA to all-trans-4-oxo-RA. Can oxidize all-trans-13,14-dihydroretinoate (DRA) to metabolites which could include all-trans-4-oxo-DRA, all-trans-4-hydroxy-DRA, all-trans-5,8-epoxy-DRA, and all-trans-18-hydroxy-DRA. Shows preference for the following substrates: atRA &gt; 9-cis-RA &gt; 13-cis-RA. Plays a central role in germ cell development: acts by degrading RAs in the developing testis, preventing STRA8 expression, thereby leading to delay of meiosis. Required for the maintenance of the undifferentiated state of male germ cells during embryonic development in Sertoli cells, inducing arrest in G0 phase of the cell cycle and preventing meiotic entry. Plays a role in skeletal development, both at the level of patterning and in the ossification of bone and the establishment of some synovial joints. Essential for postnatal survival. Its function is as follows. Also has a significant activity in oxidation of tazarotenic acid and may therefore metabolize that xenobiotic in vivo. This is Cytochrome P450 26B1 (CYP26B1) from Homo sapiens (Human).